Reading from the N-terminus, the 405-residue chain is Indoleamine 2,3-dioxygenase 2 (405 aa).

Heme is bound at residue histidine 347.

Belongs to the indoleamine 2,3-dioxygenase family. It depends on heme as a cofactor. In terms of tissue distribution, expressed mainly in antigen-presenting immune cells, liver, kidney, brain, and placenta. Highly expressed in kidney, followed by epididymis and liver (at protein level). Detected in the tails of the spermatozoa in the testis and in the kidney tubules (at protein level). Constitutively expressed in brain.

The enzyme catalyses L-tryptophan + O2 = N-formyl-L-kynurenine. The protein operates within amino-acid degradation; L-tryptophan degradation via kynurenine pathway; L-kynurenine from L-tryptophan: step 1/2. Activity is inhibited by D-1MT (1-methyl-D-tryptophan) and MTH-trp (methylthiohydantoin-DL-tryptophan) but not L-1MT (1-methyl-L-tryptophan). Catalyzes the first and rate-limiting step in the kynurenine pathway of tryptophan catabolism. Involved in immune regulation. The chain is Indoleamine 2,3-dioxygenase 2 from Mus musculus (Mouse).